A 231-amino-acid chain; its full sequence is MAKVSKRMKEISAKINAEKKYPVSEAFDLLREVSSVKFVESVDVSVALGVDPRKSDQVVRGASVLPNGTGKTVRVAVFAKGPAADAAKEAGAEVVGMEDLADEVKKGNMDFDVVIASPDSMRVVGQLGQILGPKGLMPNPKVGTVTMDVAKAVRDAKAGQVRYRVDKAGIIHTTIGKVNFTSDALKQNLERLLTDLKKAKPAVSKGIYLKKVSVSSTMGPGINVDFSDLNI.

It belongs to the universal ribosomal protein uL1 family. Part of the 50S ribosomal subunit.

Its function is as follows. Binds directly to 23S rRNA. The L1 stalk is quite mobile in the ribosome, and is involved in E site tRNA release. Protein L1 is also a translational repressor protein, it controls the translation of the L11 operon by binding to its mRNA. The protein is Large ribosomal subunit protein uL1 of Francisella tularensis subsp. tularensis (strain WY96-3418).